A 258-amino-acid polypeptide reads, in one-letter code: Protein SseB (258 aa).

May be involved in the enhancement of serine-sensitivity. The polypeptide is Protein SseB (sseB) (Escherichia coli (strain K12)).